A 445-amino-acid chain; its full sequence is Cholesterol side-chain cleavage enzyme, mitochondrial (445 aa).

Residues 1–36 constitute a mitochondrion transit peptide; sequence RGLPSRSVFLRGCQASLSTAQERLGHPGVPTREGVR.

Belongs to the cytochrome P450 family. In terms of assembly, interacts with FDX1/adrenodoxin. It depends on heme as a cofactor.

The protein localises to the mitochondrion inner membrane. It carries out the reaction 6 reduced [adrenodoxin] + cholesterol + 3 O2 + 6 H(+) = 4-methylpentanal + pregnenolone + 6 oxidized [adrenodoxin] + 4 H2O. The catalysed reaction is 2 reduced [adrenodoxin] + cholesterol + O2 + 2 H(+) = (22R)-hydroxycholesterol + 2 oxidized [adrenodoxin] + H2O. The enzyme catalyses (22R)-hydroxycholesterol + 2 reduced [adrenodoxin] + O2 + 2 H(+) = (20R,22R)-20,22-dihydroxycholesterol + 2 oxidized [adrenodoxin] + H2O. It catalyses the reaction (20R,22R)-20,22-dihydroxycholesterol + 2 reduced [adrenodoxin] + O2 + 2 H(+) = 4-methylpentanal + pregnenolone + 2 oxidized [adrenodoxin] + 2 H2O. The protein operates within lipid metabolism; C21-steroid hormone metabolism. Its pathway is steroid metabolism; cholesterol metabolism. In terms of biological role, a cytochrome P450 monooxygenase that catalyzes the side-chain hydroxylation and cleavage of cholesterol to pregnenolone, the precursor of most steroid hormones. Catalyzes three sequential oxidation reactions of cholesterol, namely the hydroxylation at C22 followed with the hydroxylation at C20 to yield 20R,22R-hydroxycholesterol that is further cleaved between C20 and C22 to yield the C21-steroid pregnenolone and 4-methylpentanal. Mechanistically, uses molecular oxygen inserting one oxygen atom into a substrate and reducing the second into a water molecule. Two electrons are provided by NADPH via a two-protein mitochondrial transfer system comprising flavoprotein FDXR (adrenodoxin/ferredoxin reductase) and nonheme iron-sulfur protein FDX1 or FDX2 (adrenodoxin/ferredoxin). This Oryctolagus cuniculus (Rabbit) protein is Cholesterol side-chain cleavage enzyme, mitochondrial (CYP11A1).